Here is a 221-residue protein sequence, read N- to C-terminus: Dynein light chain Tctex-type 4 (221 aa).

Disordered regions lie at residues 1–52 (MASR…SRRG) and 65–87 (NSLVGPGAGPGGQRPSLGPVPPL). Basic and acidic residues predominate over residues 10-21 (RQEEENAKDSGR). Ser66 carries the phosphoserine modification.

It belongs to the dynein light chain Tctex-type family. In terms of assembly, interacts with ENG/endoglin, TGFBR2 and TGFBR3. Interacts with PPP1CC. In terms of tissue distribution, ubiquitously expressed. Expressed in testis (at protein level).

The protein localises to the cell projection. Its subcellular location is the cilium. It localises to the flagellum. The protein resides in the cytoplasmic vesicle. It is found in the secretory vesicle. The protein localises to the acrosome. Its subcellular location is the cytoplasm. It localises to the cytoskeleton. The protein resides in the cilium axoneme. It is found in the nucleus. The protein localises to the microtubule organizing center. This Homo sapiens (Human) protein is Dynein light chain Tctex-type 4.